Here is an 853-residue protein sequence, read N- to C-terminus: Tape measure protein (853 aa).

2 coiled-coil regions span residues Arg360–Gln387 and Lys548–Gln568. The tract at residues Ala370–Ser393 is disordered. Low complexity predominate over residues Gln376–Gln387.

This sequence belongs to the Lambdavirus tape measure protein family. As to quaternary structure, interacts with the tail initiator complex presumably through its C-terminus domain. Interacts with the tail assembly protein G. Interacts with the tail assembly protein GT. Post-translationally, cleaved into mature protein H* by an unidentified protease.

The protein resides in the virion. Serves as a ruler that controls the length of tail by stopping the tail tube polymerization and is probably released from the tail shaft during infection to facilitate DNA translocation into the host cell. Assembles into a multimeric linear form possibly stabilized by the covering tail assembly proteins G and GT. Its C-terminus fixes the tail tip complex (J, I, L, K), thereby forming the tail assembly initiator complex. Tail tube proteins polymerize around tape measure protein, displacing the tail assembly protein G and GT. When the tail reaches the length specified by the tape measure protein, it stops and becomes capped by the tail terminator protein. Upon tail assembly, tape measure protein is cleaved into a form called H*, that plays a role later during virion entry in a new cell. Once assembled, the virion is released and can infect new cells by binding to the entry receptor LambB. After opening of a pore on the external membrane, the entry protein H* protein is probably released in the periplasmic space for successful DNA injection. This chain is Tape measure protein, found in Escherichia phage lambda (Bacteriophage lambda).